Reading from the N-terminus, the 400-residue chain is Tryptophan synthase beta chain (400 aa).

K92 carries the post-translational modification N6-(pyridoxal phosphate)lysine.

Belongs to the TrpB family. In terms of assembly, tetramer of two alpha and two beta chains. It depends on pyridoxal 5'-phosphate as a cofactor.

It carries out the reaction (1S,2R)-1-C-(indol-3-yl)glycerol 3-phosphate + L-serine = D-glyceraldehyde 3-phosphate + L-tryptophan + H2O. The protein operates within amino-acid biosynthesis; L-tryptophan biosynthesis; L-tryptophan from chorismate: step 5/5. In terms of biological role, the beta subunit is responsible for the synthesis of L-tryptophan from indole and L-serine. The sequence is that of Tryptophan synthase beta chain from Neisseria meningitidis serogroup C (strain 053442).